Consider the following 312-residue polypeptide: Zinc import ATP-binding protein ZnuC (312 aa).

Residues 13–228 (VSLEDVGVLR…PEYVRLFGSR (216 aa)) enclose the ABC transporter domain. 45 to 52 (GPNGSGKS) contacts ATP. Residues 241 to 312 (DHTHLPDGRV…HSRSGEGRHA (72 aa)) are disordered. The span at 243–312 (THLPDGRVLH…HSRSGEGRHA (70 aa)) shows a compositional bias: basic and acidic residues.

Belongs to the ABC transporter superfamily. Zinc importer (TC 3.A.1.15.5) family. As to quaternary structure, the complex is composed of two ATP-binding proteins (ZnuC), two transmembrane proteins (ZnuB) and a solute-binding protein (ZnuA).

The protein resides in the cell inner membrane. The catalysed reaction is Zn(2+)(out) + ATP(in) + H2O(in) = Zn(2+)(in) + ADP(in) + phosphate(in) + H(+)(in). Its function is as follows. Part of the ABC transporter complex ZnuABC involved in zinc import. Responsible for energy coupling to the transport system. The chain is Zinc import ATP-binding protein ZnuC from Rhizobium etli (strain ATCC 51251 / DSM 11541 / JCM 21823 / NBRC 15573 / CFN 42).